A 360-amino-acid chain; its full sequence is Inward rectifier potassium channel 13 (360 aa).

Over 1–50 (MESSNCKVITPLLSQRHRRMVTKDGHSTLQTDGAPRGLVYLRDAWGTLID) the chain is Cytoplasmic. The helical transmembrane segment at 51-77 (MRWRWVMLVFSASFVLHWLVFAVLWYV) threads the bilayer. Residues 78-105 (LAEMNGDLELDHDAPPENHTICVKYITS) lie on the Extracellular side of the membrane. The segment at residues 106–122 (FTAAFSFSLETQLTIGY) is an intramembrane region (helical; Pore-forming). Positions 119–124 (TIGYGT) match the Selectivity filter motif. At 123 to 131 (GTMFPSGDC) the chain is on the extracellular side. A helical transmembrane segment spans residues 132–157 (PSAIALLAIQMLLGLMLEAFITGAFV). Residues 158-360 (AKIARPKNRA…FQISETGLTE (203 aa)) are Cytoplasmic-facing. A Phosphoserine; by PKC modification is found at serine 201. Serine 287 bears the Phosphoserine; by PKA mark.

It belongs to the inward rectifier-type potassium channel (TC 1.A.2.1) family. KCNJ13 subfamily. As to quaternary structure, homotetramer. Post-translationally, phosphorylation at Ser-201 by PKC strongly inhibits ionic currents, while phosphorylation at Ser-287 by PKA increases them.

The protein resides in the membrane. It is found in the cell membrane. It catalyses the reaction K(+)(in) = K(+)(out). Inhibited by Ba(2+) and Cs(+), although sensitivity to those inhibitors is much lower than in other Kir channels. Functionally, inward rectifier potassium channels are characterized by a greater tendency to allow potassium to flow into the cell rather than out of it. Their voltage dependence is regulated by the concentration of extracellular potassium; as external potassium is raised, the voltage range of the channel opening shifts to more positive voltages. The inward rectification is mainly due to the blockage of outward current by internal magnesium. KCNJ13 has a very low single channel conductance, low sensitivity to block by external barium and cesium, and no dependence of its inward rectification properties on the internal blocking particle magnesium. The chain is Inward rectifier potassium channel 13 (KCNJ13) from Cavia porcellus (Guinea pig).